The chain runs to 434 residues: MAMAKNVVVIGAQWGDEGKGKIVDWLAEEAGGVVRFQGGHNAGHTLVVGGKKTILRLIPSGILHESLDCFIGSGVVVSPEALLGEIDELNAAGVKNVEGRLKIAPTCPLILPYHIALDQAREASRGKGKIGTTGRGIGPAYEDKVARRAIRAADLLHPEKLREKLDAILAYYNVQLQHLHNAEPVKAEDVMAVIEKVALRIAPMITDVSRVLNEKNKNGEKLLFEGAQGALLDIDYGTYPFVTSSNCLAGAASAGAGVGPQMLDYVLGIVKAYTTRVGSGPFPTELFDEVGAGLAERGHEFGSVTGRARRCGWFDAAALKRSIQINGISGMCITKLDVMDGVETINICVGYELPDGGKTDILPCGSDAVETCKPIYETMPGWRESTFGVKSYDALPANAKAYLKRIEEVCGAPVAIVSTGPDREETIVLHHPFA.

GTP-binding positions include 15–21 and 43–45; these read GDEGKGK and GHT. Asp-16 serves as the catalytic Proton acceptor. 2 residues coordinate Mg(2+): Asp-16 and Gly-43. IMP is bound by residues 16-19, 41-44, Thr-133, Arg-147, Gln-228, Thr-243, and Arg-307; these read DEGK and NAGH. His-44 serves as the catalytic Proton donor. Residue 303-309 participates in substrate binding; the sequence is SVTGRAR. GTP-binding positions include Arg-309, 335 to 337, and 418 to 420; these read KLD and STG.

Belongs to the adenylosuccinate synthetase family. Homodimer. Requires Mg(2+) as cofactor.

The protein resides in the cytoplasm. It carries out the reaction IMP + L-aspartate + GTP = N(6)-(1,2-dicarboxyethyl)-AMP + GDP + phosphate + 2 H(+). Its pathway is purine metabolism; AMP biosynthesis via de novo pathway; AMP from IMP: step 1/2. In terms of biological role, plays an important role in the de novo pathway of purine nucleotide biosynthesis. Catalyzes the first committed step in the biosynthesis of AMP from IMP. This chain is Adenylosuccinate synthetase, found in Neisseria meningitidis serogroup C / serotype 2a (strain ATCC 700532 / DSM 15464 / FAM18).